The primary structure comprises 207 residues: Large ribosomal subunit protein uL4 (207 aa).

The protein belongs to the universal ribosomal protein uL4 family. Part of the 50S ribosomal subunit.

In terms of biological role, one of the primary rRNA binding proteins, this protein initially binds near the 5'-end of the 23S rRNA. It is important during the early stages of 50S assembly. It makes multiple contacts with different domains of the 23S rRNA in the assembled 50S subunit and ribosome. Forms part of the polypeptide exit tunnel. The sequence is that of Large ribosomal subunit protein uL4 from Erythrobacter litoralis (strain HTCC2594).